The following is a 132-amino-acid chain: L-ectoine synthase (132 aa).

The protein belongs to the ectoine synthase family.

It carries out the reaction (2S)-4-acetamido-2-aminobutanoate = L-ectoine + H2O. The protein operates within amine and polyamine biosynthesis; ectoine biosynthesis; L-ectoine from L-aspartate 4-semialdehyde: step 3/3. Its function is as follows. Catalyzes the circularization of gamma-N-acetyl-alpha,gamma-diaminobutyric acid (ADABA) to ectoine (1,4,5,6-tetrahydro-2-methyl-4-pyrimidine carboxylic acid), which is an excellent osmoprotectant. This Rhodococcus jostii (strain RHA1) protein is L-ectoine synthase.